The following is a 310-amino-acid chain: p-hydroxybenzoic acid efflux pump subunit AaeA (310 aa).

The helical transmembrane segment at 12–32 (AITVVLVILAFIAIFNAWVYY) threads the bilayer.

This sequence belongs to the membrane fusion protein (MFP) (TC 8.A.1) family.

The protein resides in the cell inner membrane. Functionally, forms an efflux pump with AaeB. The protein is p-hydroxybenzoic acid efflux pump subunit AaeA of Escherichia coli O9:H4 (strain HS).